The sequence spans 344 residues: Envelope glycoprotein M (344 aa).

At 1-12 (MASSRVDTINLR) the chain is on the intravirion side. The helical transmembrane segment at 13–33 (IWLVSIICAALSFINVTVHLI) threads the bilayer. The Virion surface portion of the chain corresponds to 34–76 (AINFPNLGFPCAYFEINDLKAVNLSANNEIYQMTHQLYINPVQ). Residues 77 to 97 (IICYVLIMAILFLLIIIYYIV) form a helical membrane-spanning segment. Residues 98-125 (CCAKVFSSNKTSNVNQTTRDITWMGDTS) are Intravirion-facing. The chain crosses the membrane as a helical span at residues 126–146 (SCFQFILIMDTFQLFVTALSF). Residue arginine 147 is a topological domain, virion surface. The chain crosses the membrane as a helical span at residues 148–168 (LVALGAFAYSIFFVCFTTFNV). Residues 169–203 (TLITQFQSADKSFFAFQKIHPNLKGTVQFKTVVIN) lie on the Intravirion side of the membrane. The chain crosses the membrane as a helical span at residues 204–224 (LSELMLGYSTMFLGITTCLGV). Over 225–238 (GNSIYIRSITVAFS) the chain is Virion surface. The chain crosses the membrane as a helical span at residues 239–259 (SINTFLVMACIYSIVIEAVLV). Topologically, residues 260–263 (RYVK) are intravirion. A helical membrane pass occupies residues 264–284 (PLFGYYVGMFCGAVGLSFPIL). At 285-293 (QYETFFESE) the chain is on the virion surface side. A helical membrane pass occupies residues 294–314 (WSTGLIINLSVVAIISIGFII). At 315–344 (CRLVRYLVKKKRRYKQLLNAESSSLMDENE) the chain is on the intravirion side.

It belongs to the herpesviridae glycoprotein M family. Interacts (via N-terminus) with gN (via N-terminus). The gM-gN heterodimer forms the gCII complex.

Its subcellular location is the virion membrane. The protein resides in the host Golgi apparatus. It is found in the host trans-Golgi network. It localises to the host endosome membrane. The protein localises to the host nucleus inner membrane. Its function is as follows. Envelope glycoprotein important for virion assembly and egress. Plays a role in the correct incorporation of gH-gL into virion membrane. Directs the glycoprotein N (gN) to the host trans-Golgi network. This chain is Envelope glycoprotein M, found in Homo sapiens (Human).